The primary structure comprises 405 residues: 4-hydroxy-3-methylbut-2-enyl diphosphate reductase (405 aa).

Cys66 contributes to the [4Fe-4S] cluster binding site. Position 96 (His96) interacts with (2E)-4-hydroxy-3-methylbut-2-enyl diphosphate. His96 contacts dimethylallyl diphosphate. His96 is an isopentenyl diphosphate binding site. Position 158 (Cys158) interacts with [4Fe-4S] cluster. Position 186 (His186) interacts with (2E)-4-hydroxy-3-methylbut-2-enyl diphosphate. Residue His186 coordinates dimethylallyl diphosphate. His186 is an isopentenyl diphosphate binding site. Glu188 acts as the Proton donor in catalysis. Residue Thr251 participates in (2E)-4-hydroxy-3-methylbut-2-enyl diphosphate binding. [4Fe-4S] cluster is bound at residue Cys289. Ser318, Ser319, Asn320, and Ser380 together coordinate (2E)-4-hydroxy-3-methylbut-2-enyl diphosphate. Residues Ser318, Ser319, Asn320, and Ser380 each coordinate dimethylallyl diphosphate. Isopentenyl diphosphate contacts are provided by Ser318, Ser319, Asn320, and Ser380.

Belongs to the IspH family. It depends on [4Fe-4S] cluster as a cofactor.

It carries out the reaction isopentenyl diphosphate + 2 oxidized [2Fe-2S]-[ferredoxin] + H2O = (2E)-4-hydroxy-3-methylbut-2-enyl diphosphate + 2 reduced [2Fe-2S]-[ferredoxin] + 2 H(+). The enzyme catalyses dimethylallyl diphosphate + 2 oxidized [2Fe-2S]-[ferredoxin] + H2O = (2E)-4-hydroxy-3-methylbut-2-enyl diphosphate + 2 reduced [2Fe-2S]-[ferredoxin] + 2 H(+). It participates in isoprenoid biosynthesis; dimethylallyl diphosphate biosynthesis; dimethylallyl diphosphate from (2E)-4-hydroxy-3-methylbutenyl diphosphate: step 1/1. It functions in the pathway isoprenoid biosynthesis; isopentenyl diphosphate biosynthesis via DXP pathway; isopentenyl diphosphate from 1-deoxy-D-xylulose 5-phosphate: step 6/6. In terms of biological role, catalyzes the conversion of 1-hydroxy-2-methyl-2-(E)-butenyl 4-diphosphate (HMBPP) into a mixture of isopentenyl diphosphate (IPP) and dimethylallyl diphosphate (DMAPP). Acts in the terminal step of the DOXP/MEP pathway for isoprenoid precursor biosynthesis. In Cyanothece sp. (strain PCC 7425 / ATCC 29141), this protein is 4-hydroxy-3-methylbut-2-enyl diphosphate reductase.